We begin with the raw amino-acid sequence, 601 residues long: Elongation factor 4 (601 aa).

In terms of domain architecture, tr-type G spans 6–188 (KFTRNFSIIA…AICYLLPPPV (183 aa)). GTP contacts are provided by residues 18–23 (DHGKST) and 135–138 (NKID).

This sequence belongs to the TRAFAC class translation factor GTPase superfamily. Classic translation factor GTPase family. LepA subfamily.

The protein localises to the cell inner membrane. The enzyme catalyses GTP + H2O = GDP + phosphate + H(+). Functionally, required for accurate and efficient protein synthesis under certain stress conditions. May act as a fidelity factor of the translation reaction, by catalyzing a one-codon backward translocation of tRNAs on improperly translocated ribosomes. Back-translocation proceeds from a post-translocation (POST) complex to a pre-translocation (PRE) complex, thus giving elongation factor G a second chance to translocate the tRNAs correctly. Binds to ribosomes in a GTP-dependent manner. The sequence is that of Elongation factor 4 from Leptospira biflexa serovar Patoc (strain Patoc 1 / Ames).